The sequence spans 392 residues: Caveolae-associated protein 1 (392 aa).

M1 is subject to N-acetylmethionine. Basic and acidic residues predominate over residues 1 to 10 (MEDVTLHIVE). Positions 1 to 45 (MEDVTLHIVERPYSGYPDASSEGPEPTPGEARATEEPSGTGSDEL) are disordered. The segment at 1 to 100 (MEDVTLHIVE…IQGELSKLGK (100 aa)) is required for homotrimerization and for interaction with CAVIN2 and CAVIN3. A phosphoserine mark is found at S21 and S38. T40 carries the post-translational modification Phosphothreonine. A phosphoserine mark is found at S42 and S48. A nuclear export signal region spans residues 54–64 (VLVLSLLDKII). Positions 55–77 (LVLSLLDKIIGAVDQIQLTQAQL) are leucine-zipper 1. K118 is covalently cross-linked (Glycyl lysine isopeptide (Lys-Gly) (interchain with G-Cter in SUMO2)). Phosphoserine is present on S120. A Glycyl lysine isopeptide (Lys-Gly) (interchain with G-Cter in SUMO2) cross-link involves residue K124. The segment at 138 to 154 (KKLEVNEAELLRRRNFK) is nuclear localization signal. Y158 is modified (phosphotyrosine). K163 is covalently cross-linked (Glycyl lysine isopeptide (Lys-Gly) (interchain with G-Cter in SUMO1); alternate). K163 is covalently cross-linked (Glycyl lysine isopeptide (Lys-Gly) (interchain with G-Cter in SUMO2); alternate). A Glycyl lysine isopeptide (Lys-Gly) (interchain with G-Cter in SUMO2) cross-link involves residue K167. The tract at residues 168–188 (LSVSKSLKESEALPEKEGDEL) is leucine-zipper 2. S169 and S171 each carry phosphoserine. A Glycyl lysine isopeptide (Lys-Gly) (interchain with G-Cter in SUMO2) cross-link involves residue K172. 2 positions are modified to phosphoserine: S173 and S177. Positions 173–183 (SLKESEALPEK) are enriched in basic and acidic residues. The disordered stretch occupies residues 173-198 (SLKESEALPEKEGDELGEGERPEEDA). Over residues 184–198 (EGDELGEGERPEEDA) the composition is skewed to acidic residues. A coiled-coil region spans residues 201 to 284 (IELSSDEAVE…RMNKLGTRLV (84 aa)). S204 and S205 each carry phosphoserine. A nuclear localization signal region spans residues 235–251 (KKAFSKEKMEKTKVRTR). The interval 259–299 (LKTKENLEKTRHTLEKRMNKLGTRLVPVERREKLKTSRDKL) is leucine-zipper 3. S302 is modified (phosphoserine). T304 is modified (phosphothreonine). A Phosphotyrosine modification is found at Y310. A Glycyl lysine isopeptide (Lys-Gly) (interchain with G-Cter in SUMO2) cross-link involves residue K328. The interval 347-367 (GPDDDEVGAERGAETDLLRGS) is disordered. Positions 354-363 (GAERGAETDL) are enriched in basic and acidic residues. A phosphoserine mark is found at S367, S368, S381, S389, and S391.

This sequence belongs to the CAVIN family. Component of the CAVIN complex composed of CAVIN1, CAVIN2, CAVIN3 and CAVIN4. Interacts with RNA polymerase I subunit POLR1A/RPA1 and TTF1. Binds the 3' end of pre-rRNA. Interacts with transcription factor ZNF148. Interacts with LIPE in the adipocyte cytoplasm. Interacts with CAV1, CAV3, CAVIN2, CAVIN3 and CAVIN4. Post-translationally, phosphorylated. Present in active and inactive forms. Changes in phosphorylation pattern may alter activity. Phosphorylation at Tyr-158 is essential for its function in the regulation of ribosomal transcriptional activity. Monoubiquitinated. Expressed in the adipocyte (at protein level). Expressed in all striated and smooth muscles tested including diaphragm, esophageal striated muscle, fibroblast, endocardial endothelium, epicardial mesothelium, intestinal smooth muscle, masseter, soleus muscle, vascular smooth muscle and white gastrocnemius muscle (at protein level). Expressed in the endothelium and perineural sheath (at protein level). Not expressed in hepatocytes.

Its subcellular location is the membrane. It localises to the caveola. The protein resides in the cell membrane. It is found in the microsome. The protein localises to the endoplasmic reticulum. Its subcellular location is the cytoplasm. It localises to the cytosol. The protein resides in the mitochondrion. It is found in the nucleus. In terms of biological role, plays an important role in caveolae formation and organization. Essential for the formation of caveolae in all tissues. Core component of the CAVIN complex which is essential for recruitment of the complex to the caveolae in presence of calveolin-1 (CAV1). Essential for normal oligomerization of CAV1. Promotes ribosomal transcriptional activity in response to metabolic challenges in the adipocytes and plays an important role in the formation of the ribosomal transcriptional loop. Dissociates transcription complexes paused by DNA-bound TTF1, thereby releasing both RNA polymerase I and pre-RNA from the template. The caveolae biogenesis pathway is required for the secretion of proteins such as GASK1A. This Rattus norvegicus (Rat) protein is Caveolae-associated protein 1.